The sequence spans 92 residues: MLEIEIVYGLPDRQVLKTMQLAEGTTVRTAALQSGLDGIFENLNLHSAPLGIFGKAVKDDTPLRDGDRIEVYRPLLIDPKEARRKRVQNQEE.

The protein belongs to the UPF0125 (RnfH) family.

In Neisseria gonorrhoeae (strain NCCP11945), this protein is Protein RnfH.